A 214-amino-acid chain; its full sequence is Uridine kinase (214 aa).

15-22 contributes to the ATP binding site; that stretch reads GASASGKS.

This sequence belongs to the uridine kinase family.

It is found in the cytoplasm. The catalysed reaction is uridine + ATP = UMP + ADP + H(+). It catalyses the reaction cytidine + ATP = CMP + ADP + H(+). Its pathway is pyrimidine metabolism; CTP biosynthesis via salvage pathway; CTP from cytidine: step 1/3. It functions in the pathway pyrimidine metabolism; UMP biosynthesis via salvage pathway; UMP from uridine: step 1/1. This chain is Uridine kinase, found in Aeromonas salmonicida (strain A449).